Reading from the N-terminus, the 129-residue chain is Small ribosomal subunit protein uS11 (129 aa).

Belongs to the universal ribosomal protein uS11 family. In terms of assembly, part of the 30S ribosomal subunit. Interacts with proteins S7 and S18. Binds to IF-3.

In terms of biological role, located on the platform of the 30S subunit, it bridges several disparate RNA helices of the 16S rRNA. Forms part of the Shine-Dalgarno cleft in the 70S ribosome. This is Small ribosomal subunit protein uS11 from Sphingopyxis alaskensis (strain DSM 13593 / LMG 18877 / RB2256) (Sphingomonas alaskensis).